Consider the following 317-residue polypeptide: Acetyl-coenzyme A carboxylase carboxyl transferase subunit beta (317 aa).

Residues 1–28 form a disordered region; it reads MANNMTDTMTKPDINNDSTSLQQNGNKA. The CoA carboxyltransferase N-terminal domain maps to 55–317; the sequence is PSTKCSSCHS…LCSVPNVDVQ (263 aa). Zn(2+)-binding residues include cysteine 59, cysteine 62, cysteine 78, and cysteine 81. The segment at 59-81 adopts a C4-type zinc-finger fold; sequence CSSCHSIITNTALIFNCYVCPHC.

The protein belongs to the AccD/PCCB family. Acetyl-CoA carboxylase is a heterohexamer composed of biotin carboxyl carrier protein (AccB), biotin carboxylase (AccC) and two subunits each of ACCase subunit alpha (AccA) and ACCase subunit beta (AccD). Requires Zn(2+) as cofactor.

The protein localises to the cytoplasm. It carries out the reaction N(6)-carboxybiotinyl-L-lysyl-[protein] + acetyl-CoA = N(6)-biotinyl-L-lysyl-[protein] + malonyl-CoA. It participates in lipid metabolism; malonyl-CoA biosynthesis; malonyl-CoA from acetyl-CoA: step 1/1. Functionally, component of the acetyl coenzyme A carboxylase (ACC) complex. Biotin carboxylase (BC) catalyzes the carboxylation of biotin on its carrier protein (BCCP) and then the CO(2) group is transferred by the transcarboxylase to acetyl-CoA to form malonyl-CoA. The protein is Acetyl-coenzyme A carboxylase carboxyl transferase subunit beta of Psychrobacter cryohalolentis (strain ATCC BAA-1226 / DSM 17306 / VKM B-2378 / K5).